Here is a 1053-residue protein sequence, read N- to C-terminus: uncharacterized protein (1053 aa).

The protein belongs to the mycobacterial PPE family.

This is an uncharacterized protein from Mycobacterium tuberculosis (strain ATCC 25618 / H37Rv).